Consider the following 128-residue polypeptide: MIDVNLINGIALAFEGDAVYSMYIRRHLILKGMTKPNKLHQEATKYVSAKAQARLIALMLEEQVLTEKEEEIYKRGRNTNSHTKAKNADVVTYRMSTGFEAVMGYLHMTENLERLESLVSWCIQKVEG.

The active site involves Asp-17.

The protein belongs to the MrnC RNase family. In terms of assembly, homodimer. Requires Mg(2+) as cofactor.

The protein resides in the cytoplasm. Involved in correct processing of both the 5' and 3' ends of 23S rRNA precursor. Processes 30S rRNA precursor transcript even in absence of ribonuclease 3 (Rnc); Rnc processes 30S rRNA into smaller rRNA precursors. This is Mini-ribonuclease 3 from Streptococcus pneumoniae (strain ATCC BAA-255 / R6).